Consider the following 209-residue polypeptide: Imidazole glycerol phosphate synthase subunit HisH (209 aa).

Positions 1–205 (MIAIIDYGMG…QGVVEAWKSS (205 aa)) constitute a Glutamine amidotransferase type-1 domain. Catalysis depends on cysteine 79, which acts as the Nucleophile. Active-site residues include histidine 180 and glutamate 182.

In terms of assembly, heterodimer of HisH and HisF.

It localises to the cytoplasm. The enzyme catalyses 5-[(5-phospho-1-deoxy-D-ribulos-1-ylimino)methylamino]-1-(5-phospho-beta-D-ribosyl)imidazole-4-carboxamide + L-glutamine = D-erythro-1-(imidazol-4-yl)glycerol 3-phosphate + 5-amino-1-(5-phospho-beta-D-ribosyl)imidazole-4-carboxamide + L-glutamate + H(+). The catalysed reaction is L-glutamine + H2O = L-glutamate + NH4(+). The protein operates within amino-acid biosynthesis; L-histidine biosynthesis; L-histidine from 5-phospho-alpha-D-ribose 1-diphosphate: step 5/9. IGPS catalyzes the conversion of PRFAR and glutamine to IGP, AICAR and glutamate. The HisH subunit catalyzes the hydrolysis of glutamine to glutamate and ammonia as part of the synthesis of IGP and AICAR. The resulting ammonia molecule is channeled to the active site of HisF. The chain is Imidazole glycerol phosphate synthase subunit HisH from Bacillus cereus (strain ATCC 14579 / DSM 31 / CCUG 7414 / JCM 2152 / NBRC 15305 / NCIMB 9373 / NCTC 2599 / NRRL B-3711).